Consider the following 483-residue polypeptide: Probable glycine dehydrogenase (decarboxylating) subunit 2 (483 aa).

The residue at position 267 (Lys267) is an N6-(pyridoxal phosphate)lysine.

It belongs to the GcvP family. C-terminal subunit subfamily. The glycine cleavage system is composed of four proteins: P, T, L and H. In this organism, the P 'protein' is a heterodimer of two subunits. The cofactor is pyridoxal 5'-phosphate.

The enzyme catalyses N(6)-[(R)-lipoyl]-L-lysyl-[glycine-cleavage complex H protein] + glycine + H(+) = N(6)-[(R)-S(8)-aminomethyldihydrolipoyl]-L-lysyl-[glycine-cleavage complex H protein] + CO2. In terms of biological role, the glycine cleavage system catalyzes the degradation of glycine. The P protein binds the alpha-amino group of glycine through its pyridoxal phosphate cofactor; CO(2) is released and the remaining methylamine moiety is then transferred to the lipoamide cofactor of the H protein. In Kosmotoga olearia (strain ATCC BAA-1733 / DSM 21960 / TBF 19.5.1), this protein is Probable glycine dehydrogenase (decarboxylating) subunit 2.